A 342-amino-acid polypeptide reads, in one-letter code: Heat-inducible transcription repressor HrcA (342 aa).

It belongs to the HrcA family.

Its function is as follows. Negative regulator of class I heat shock genes (grpE-dnaK-dnaJ and groELS operons). Prevents heat-shock induction of these operons. In Mesoplasma florum (strain ATCC 33453 / NBRC 100688 / NCTC 11704 / L1) (Acholeplasma florum), this protein is Heat-inducible transcription repressor HrcA.